Reading from the N-terminus, the 117-residue chain is Large ribosomal subunit protein bL19 (117 aa).

The protein belongs to the bacterial ribosomal protein bL19 family.

Functionally, this protein is located at the 30S-50S ribosomal subunit interface and may play a role in the structure and function of the aminoacyl-tRNA binding site. In Leptothrix cholodnii (strain ATCC 51168 / LMG 8142 / SP-6) (Leptothrix discophora (strain SP-6)), this protein is Large ribosomal subunit protein bL19.